The following is a 439-amino-acid chain: Methylenetetrahydrofolate--tRNA-(uracil-5-)-methyltransferase TrmFO (439 aa).

FAD is bound at residue 8 to 13 (GGGLAG).

Belongs to the MnmG family. TrmFO subfamily. FAD serves as cofactor.

The protein resides in the cytoplasm. The enzyme catalyses uridine(54) in tRNA + (6R)-5,10-methylene-5,6,7,8-tetrahydrofolate + NADH + H(+) = 5-methyluridine(54) in tRNA + (6S)-5,6,7,8-tetrahydrofolate + NAD(+). It carries out the reaction uridine(54) in tRNA + (6R)-5,10-methylene-5,6,7,8-tetrahydrofolate + NADPH + H(+) = 5-methyluridine(54) in tRNA + (6S)-5,6,7,8-tetrahydrofolate + NADP(+). In terms of biological role, catalyzes the folate-dependent formation of 5-methyl-uridine at position 54 (M-5-U54) in all tRNAs. The chain is Methylenetetrahydrofolate--tRNA-(uracil-5-)-methyltransferase TrmFO from Dictyoglomus thermophilum (strain ATCC 35947 / DSM 3960 / H-6-12).